Reading from the N-terminus, the 35-residue chain is MASEIFTIAGLSIVLTLVGVALGYGILRITQGGAE.

Residues 9 to 27 form a helical membrane-spanning segment; the sequence is AGLSIVLTLVGVALGYGIL.

Belongs to the PetM family. As to quaternary structure, the 4 large subunits of the cytochrome b6-f complex are cytochrome b6, subunit IV (17 kDa polypeptide, PetD), cytochrome f and the Rieske protein, while the 4 small subunits are PetG, PetL, PetM and PetN. The complex functions as a dimer.

It localises to the cellular thylakoid membrane. Its function is as follows. Component of the cytochrome b6-f complex, which mediates electron transfer between photosystem II (PSII) and photosystem I (PSI), cyclic electron flow around PSI, and state transitions. The polypeptide is Cytochrome b6-f complex subunit 7 (Synechococcus sp. (strain JA-3-3Ab) (Cyanobacteria bacterium Yellowstone A-Prime)).